The sequence spans 697 residues: Choline transporter-like protein 2 (697 aa).

Residues 1–30 lie on the Cytoplasmic side of the membrane; the sequence is MDMEEKPKYGEPRKFDPSFKGPIQNRGCTD. The helical transmembrane segment at 31-51 threads the bilayer; that stretch reads IVCCIIFIIAILGYLAVGILA. The Extracellular portion of the chain corresponds to 52-226; the sequence is WTHGDPRKVI…KIFEDYTKSW (175 aa). N-linked (GlcNAc...) asparagine glycans are attached at residues Asn-113 and Asn-204. A helical transmembrane segment spans residues 227 to 247; sequence YWILICLLIAVVLSLIFIVLL. Over 248–249 the chain is Cytoplasmic; the sequence is RF. A helical membrane pass occupies residues 250–270; the sequence is LAGVMVWVMILMVVAVIAYGI. The Extracellular portion of the chain corresponds to 271–309; that stretch reads AHCSIKYVSLKDTPGSNITLQQLGFQPDFAVYLHIRQTW. Asn-287 carries N-linked (GlcNAc...) asparagine glycosylation. A helical transmembrane segment spans residues 310 to 330; the sequence is LAFIIILAILELIIILLLIFL. The Cytoplasmic portion of the chain corresponds to 331–353; that stretch reads RNRIRVAVELMKEASRAIGYVMS. A helical membrane pass occupies residues 354 to 374; it reads SLVFPIFTFFLLAIVIAFWGV. Topologically, residues 375–435 are extracellular; sequence NAVFLSTSSE…YGGETPYHKY (61 aa). Asn-391 and Asn-406 each carry an N-linked (GlcNAc...) asparagine glycan. The helical transmembrane segment at 436-456 threads the bilayer; the sequence is LILLQFYNVFLFFWCANFVTA. The Cytoplasmic segment spans residues 457–498; the sequence is LGQMTLAGAFASYYWAFDKSKDMPAFPLCASLGRSLRYHTGS. Residues 499-519 traverse the membrane as a helical segment; sequence LAFGSLLLAIVQVIRVLLEYI. Topologically, residues 520–593 are extracellular; it reads DHKLKGAENK…RVVVLDKVTD (74 aa). A helical membrane pass occupies residues 594 to 614; the sequence is FILFLGKLLIVGLVGIFAFFF. The Cytoplasmic segment spans residues 615 to 632; it reads FSGQTDAFKGTAPSLHYY. The chain crosses the membrane as a helical span at residues 633-653; that stretch reads WVPILTVLVCSYLIAHGFFSV. At 654–697 the chain is on the extracellular side; the sequence is YAMCVDTLFLCFLEDLERNDGSAERPYLMSENLLNVLKKKNQAN.

This sequence belongs to the CTL (choline transporter-like) family.

The protein localises to the cell membrane. Its subcellular location is the mitochondrion outer membrane. It catalyses the reaction choline(out) + n H(+)(in) = choline(in) + n H(+)(out). It carries out the reaction ethanolamine(out) + n H(+)(in) = ethanolamine(in) + n H(+)(out). Its function is as follows. Choline/H+ antiporter, mainly in mitochodria. Also acts as a low-affinity ethanolamine/H+ antiporter, regulating the supply of extracellular ethanolamine (Etn) for the CDP-Etn pathway, redistribute intracellular Etn and balance the CDP-Cho and CDP-Etn arms of the Kennedy pathway. The protein is Choline transporter-like protein 2 (slc44a2) of Danio rerio (Zebrafish).